Consider the following 279-residue polypeptide: Proline-rich protein 23D1 (279 aa).

2 disordered regions span residues 1-60 and 247-270; these read MYGY…PHLN and LRPM…RPPS. Polar residues predominate over residues 15–33; that stretch reads TEPQNDNEGETSLATTQMN.

It belongs to the PRR23 family.

This chain is Proline-rich protein 23D1 (PRR23D1), found in Homo sapiens (Human).